The sequence spans 625 residues: Zinc finger protein 652-A (625 aa).

The tract at residues 80 to 255 (FFRDSKPINE…PSDKAKSEEK (176 aa)) is disordered. The segment covering 82–100 (RDSKPINEVHSVKGERENS) has biased composition (basic and acidic residues). Residues 101–127 (GESEEEEDDDDDDDDEDDEEGEEDEDE) are compositionally biased toward acidic residues. Over residues 150–166 (KGDKGVAQDSSHIKTSS) the composition is skewed to basic and acidic residues. Acidic residues predominate over residues 167–186 (DDEEGDSGEDDQDSHEDEEN). Over residues 240-255 (PKEPKSPSDKAKSEEK) the composition is skewed to basic and acidic residues. The segment at 258 to 281 (LTCDKCPRVFNTRWYLEKHMNVTH) adopts a C2H2-type 1 zinc-finger fold. A C2H2-type 2; degenerate zinc finger spans residues 285 to 307 (QICDKCGKKFVLESELSLHLQTD). 6 consecutive C2H2-type zinc fingers follow at residues 312–335 (IQCITCNKTFKKLWSLHEHIKIVH), 342–364 (FSCEICEKKFYTMAHVRKHLVAH), 370–392 (FTCETCGKSFKRSMSLKVHSLQH), 398–420 (FRCENCDERFQYKYQLRSHMSIH), 426–448 (FMCQWCGKDFNMKQYFDEHMKTH), and 454–476 (FICEICGKSFTSRPNMKRHRRTH). The C2H2-type 9; degenerate zinc finger occupies 482 to 505 (YPCDVCGMRFRFSNMLKAHKEKCF).

It belongs to the krueppel C2H2-type zinc-finger protein family.

The protein localises to the nucleus. May be involved in transcriptional regulation. The protein is Zinc finger protein 652-A (znf652-a) of Xenopus laevis (African clawed frog).